The following is a 494-amino-acid chain: V-type proton ATPase subunit B (494 aa).

It belongs to the ATPase alpha/beta chains family. In terms of assembly, V-ATPase is a heteromultimeric enzyme composed of a peripheral catalytic V1 complex (main components: subunits A, B, C, D, E, and F) attached to an integral membrane V0 proton pore complex (main component: the proteolipid protein).

Non-catalytic subunit of the peripheral V1 complex of vacuolar ATPase. V-ATPase is responsible for acidifying a variety of intracellular compartments in eukaryotic cells. The sequence is that of V-type proton ATPase subunit B (VAPB) from Plasmodium falciparum.